Here is a 433-residue protein sequence, read N- to C-terminus: Homogentisate 1,2-dioxygenase (433 aa).

Histidine 288 serves as the catalytic Proton acceptor. Fe cation-binding residues include histidine 331 and glutamate 337. 2 residues coordinate homogentisate: tyrosine 346 and histidine 367. Histidine 367 lines the Fe cation pocket.

Belongs to the homogentisate dioxygenase family. In terms of assembly, hexamer; dimer of trimers. The cofactor is Fe cation.

The catalysed reaction is homogentisate + O2 = 4-maleylacetoacetate + H(+). It participates in amino-acid degradation; L-phenylalanine degradation; acetoacetate and fumarate from L-phenylalanine: step 4/6. In terms of biological role, involved in the catabolism of homogentisate (2,5-dihydroxyphenylacetate or 2,5-OH-PhAc), a central intermediate in the degradation of phenylalanine and tyrosine. Catalyzes the oxidative ring cleavage of the aromatic ring of homogentisate to yield maleylacetoacetate. This is Homogentisate 1,2-dioxygenase from Pseudomonas putida (strain GB-1).